The chain runs to 549 residues: Glucose-6-phosphate isomerase (549 aa).

Glutamate 355 serves as the catalytic Proton donor. Residues histidine 386 and lysine 514 contribute to the active site.

Belongs to the GPI family.

It localises to the cytoplasm. The enzyme catalyses alpha-D-glucose 6-phosphate = beta-D-fructose 6-phosphate. Its pathway is carbohydrate biosynthesis; gluconeogenesis. It functions in the pathway carbohydrate degradation; glycolysis; D-glyceraldehyde 3-phosphate and glycerone phosphate from D-glucose: step 2/4. Catalyzes the reversible isomerization of glucose-6-phosphate to fructose-6-phosphate. The chain is Glucose-6-phosphate isomerase from Salmonella paratyphi A (strain AKU_12601).